The primary structure comprises 79 residues: Small ribosomal subunit protein bS16c (79 aa).

Belongs to the bacterial ribosomal protein bS16 family.

Its subcellular location is the plastid. It is found in the chloroplast. This chain is Small ribosomal subunit protein bS16c, found in Thalassiosira pseudonana (Marine diatom).